The chain runs to 590 residues: Beta-fructofuranosidase, cell wall isozyme (590 aa).

The first 28 residues, 1–28, serve as a signal peptide directing secretion; it reads MGTRPRGVVLAPWAVVLVLVLALRLAGA. Residue Asp68 is part of the active site. Asn190 and Asn341 each carry an N-linked (GlcNAc...) asparagine glycan.

It belongs to the glycosyl hydrolase 32 family.

The protein resides in the secreted. It localises to the cell wall. The enzyme catalyses Hydrolysis of terminal non-reducing beta-D-fructofuranoside residues in beta-D-fructofuranosides.. The polypeptide is Beta-fructofuranosidase, cell wall isozyme (Zea mays (Maize)).